The sequence spans 202 residues: Large ribosomal subunit protein uL4 (202 aa).

The interval 40-71 is disordered; that stretch reads GRQGSKAQKTRSQVSGGGKKPWRQKGSGRARA. The segment covering 44 to 53 has biased composition (polar residues); it reads SKAQKTRSQV.

It belongs to the universal ribosomal protein uL4 family. In terms of assembly, part of the 50S ribosomal subunit.

Its function is as follows. One of the primary rRNA binding proteins, this protein initially binds near the 5'-end of the 23S rRNA. It is important during the early stages of 50S assembly. It makes multiple contacts with different domains of the 23S rRNA in the assembled 50S subunit and ribosome. Functionally, forms part of the polypeptide exit tunnel. The sequence is that of Large ribosomal subunit protein uL4 from Hahella chejuensis (strain KCTC 2396).